We begin with the raw amino-acid sequence, 300 residues long: Protoheme IX farnesyltransferase (300 aa).

Helical transmembrane passes span 24-44 (VTQLAVFCAVIGMFLATPGMV), 48-68 (VLIGGTVGIWLLAGAAFAINC), 94-114 (PQILLFSAVLGSIGAWTLYTF), 118-138 (LTMWLTIATFVGYAVIYTLLL), 146-166 (IVIGGASGAMPPALGWAAVTG), 172-192 (AWILVLIIFVWTPPHFWVLAL), 217-237 (LHILLYTVILFAVTLMPFISG), 239-259 (SGAVYLTSAVLLGAVFLAYAW), and 278-298 (IVYLSLLFAALLVDHYARPLL).

Belongs to the UbiA prenyltransferase family. Protoheme IX farnesyltransferase subfamily.

The protein localises to the cell inner membrane. The enzyme catalyses heme b + (2E,6E)-farnesyl diphosphate + H2O = Fe(II)-heme o + diphosphate. It functions in the pathway porphyrin-containing compound metabolism; heme O biosynthesis; heme O from protoheme: step 1/1. In terms of biological role, converts heme B (protoheme IX) to heme O by substitution of the vinyl group on carbon 2 of heme B porphyrin ring with a hydroxyethyl farnesyl side group. This chain is Protoheme IX farnesyltransferase, found in Burkholderia vietnamiensis (strain G4 / LMG 22486) (Burkholderia cepacia (strain R1808)).